Here is a 298-residue protein sequence, read N- to C-terminus: MGTGIEMLSRKEQHNANKLHKRLRRLVGTAIADFNMIESGDRVMVCLSGGKDSYALLDILRSLQAHAATQFELIAVNLDQKQPGFPEHVLPNYLTSIGMPFRIVEQDTYSVVKRLIPEGKTTCSLCSRLRRGVLYRVADELGATKIALGHHRDDILETLLLNLFHGGKLKTMPPKLVSDDGKHIVIRPLAYCKEKDLAAYAEMENFPIIPCNLCGSQKNMQRQVVKEMLQQWDKKFPGRLENMFSSLQNIQPSHLLDSSLYDFHGLKTGNGPVVDGDRAFDPEPFEPGVEELLSLNKD.

Residues 48–53 (SGGKDS) carry the PP-loop motif motif. 3 residues coordinate [4Fe-4S] cluster: Cys-123, Cys-126, and Cys-214.

The protein belongs to the TtcA family. Homodimer. Mg(2+) is required as a cofactor. [4Fe-4S] cluster serves as cofactor.

It is found in the cytoplasm. It catalyses the reaction cytidine(32) in tRNA + S-sulfanyl-L-cysteinyl-[cysteine desulfurase] + AH2 + ATP = 2-thiocytidine(32) in tRNA + L-cysteinyl-[cysteine desulfurase] + A + AMP + diphosphate + H(+). It participates in tRNA modification. In terms of biological role, catalyzes the ATP-dependent 2-thiolation of cytidine in position 32 of tRNA, to form 2-thiocytidine (s(2)C32). The sulfur atoms are provided by the cysteine/cysteine desulfurase (IscS) system. The protein is tRNA-cytidine(32) 2-sulfurtransferase of Nitrosospira multiformis (strain ATCC 25196 / NCIMB 11849 / C 71).